Consider the following 705-residue polypeptide: Elongation factor G (705 aa).

A tr-type G domain is found at 8 to 290 (HRYRNIGIMA…GVIHLLPSPA (283 aa)). Residues 17-24 (AHIDAGKT), 88-92 (DTPGH), and 142-145 (NKMD) contribute to the GTP site.

Belongs to the TRAFAC class translation factor GTPase superfamily. Classic translation factor GTPase family. EF-G/EF-2 subfamily.

The protein resides in the cytoplasm. Functionally, catalyzes the GTP-dependent ribosomal translocation step during translation elongation. During this step, the ribosome changes from the pre-translocational (PRE) to the post-translocational (POST) state as the newly formed A-site-bound peptidyl-tRNA and P-site-bound deacylated tRNA move to the P and E sites, respectively. Catalyzes the coordinated movement of the two tRNA molecules, the mRNA and conformational changes in the ribosome. This is Elongation factor G from Xylella fastidiosa (strain 9a5c).